The chain runs to 122 residues: Serum amyloid A-3 protein (122 aa).

An N-terminal signal peptide occupies residues 1–18 (MKLSIGIIFCFLILGVNS). Residues 88–122 (GRGAEDSKADQEANQWGRSGNDPNHFRPKGLPDKY) form a disordered region. The segment covering 99–109 (EANQWGRSGND) has biased composition (polar residues).

This sequence belongs to the SAA family. As to expression, expressed by the liver; secreted in plasma. Expressed in synovial fibroblasts.

Its subcellular location is the secreted. Its function is as follows. Major acute phase reactant. Apolipoprotein of the HDL complex. In vitro exhibits antimicrobial activity against Escherichia coli, Streptococcus uberis and Pseudomonas aeruginosa. This Oryctolagus cuniculus (Rabbit) protein is Serum amyloid A-3 protein (SAA3).